The chain runs to 413 residues: Gamma-glutamyl phosphate reductase (413 aa).

The protein belongs to the gamma-glutamyl phosphate reductase family.

It is found in the cytoplasm. The enzyme catalyses L-glutamate 5-semialdehyde + phosphate + NADP(+) = L-glutamyl 5-phosphate + NADPH + H(+). Its pathway is amino-acid biosynthesis; L-proline biosynthesis; L-glutamate 5-semialdehyde from L-glutamate: step 2/2. In terms of biological role, catalyzes the NADPH-dependent reduction of L-glutamate 5-phosphate into L-glutamate 5-semialdehyde and phosphate. The product spontaneously undergoes cyclization to form 1-pyrroline-5-carboxylate. This chain is Gamma-glutamyl phosphate reductase, found in Caulobacter vibrioides (strain ATCC 19089 / CIP 103742 / CB 15) (Caulobacter crescentus).